The primary structure comprises 468 residues: Glutamate--tRNA ligase (468 aa).

A 'HIGH' region motif is present at residues 12 to 22 (PSPTGFIHLGN). The 'KMSKS' region motif lies at 244–248 (KMSKR). ATP is bound at residue K247.

Belongs to the class-I aminoacyl-tRNA synthetase family. Glutamate--tRNA ligase type 1 subfamily. As to quaternary structure, monomer.

It is found in the cytoplasm. It catalyses the reaction tRNA(Glu) + L-glutamate + ATP = L-glutamyl-tRNA(Glu) + AMP + diphosphate. Its function is as follows. Catalyzes the attachment of glutamate to tRNA(Glu) in a two-step reaction: glutamate is first activated by ATP to form Glu-AMP and then transferred to the acceptor end of tRNA(Glu). The sequence is that of Glutamate--tRNA ligase from Polynucleobacter necessarius subsp. necessarius (strain STIR1).